Consider the following 419-residue polypeptide: Multiple organellar RNA editing factor 1, mitochondrial (419 aa).

The transit peptide at 1–60 (MAMISHRLRRALLTATSYVNRSISSSITPASDFPSVSAAVLKRSVIGRSTEVATRAPARL) directs the protein to the mitochondrion. Positions 174-401 (KEYGGDKYEN…AGQPGSDQVR (228 aa)) are disordered. Positions 237-252 (GPQQGYATPGQGQGTQ) are enriched in low complexity. Gly residues predominate over residues 310 to 327 (GQGGSGNYSQGPQGGYNQ). A compositionally biased stretch (low complexity) spans 342–356 (GPASGAGNLGPAPGA). A compositionally biased stretch (gly residues) spans 357 to 367 (GNPGYGQGYSG). A compositionally biased stretch (polar residues) spans 371–401 (EQNQTFPQADQRNRDWNNNNPAGQPGSDQVR).

This sequence belongs to the MORF family. As to quaternary structure, homodimer and heterodimer with MORF3. Heterodimers with MORF8/RIP1, MORF4/RIP4 and MORF6/RIP6. Interacts with PCMP-E90/MEF13. Interacts with PCMP-H13/MEF35.

It localises to the mitochondrion. Its function is as follows. Involved in organellar RNA editing. Required for the processing of numerous RNA editing sites in mitochondria. Binds to the mitochondrial MEF19 and MEF21 factors, two pentatricopeptide repeat-containing proteins involved in RNA editing. The polypeptide is Multiple organellar RNA editing factor 1, mitochondrial (Arabidopsis thaliana (Mouse-ear cress)).